The following is a 112-amino-acid chain: Putative pterin-4-alpha-carbinolamine dehydratase (112 aa).

Belongs to the pterin-4-alpha-carbinolamine dehydratase family.

It catalyses the reaction (4aS,6R)-4a-hydroxy-L-erythro-5,6,7,8-tetrahydrobiopterin = (6R)-L-erythro-6,7-dihydrobiopterin + H2O. The chain is Putative pterin-4-alpha-carbinolamine dehydratase from Shewanella piezotolerans (strain WP3 / JCM 13877).